Consider the following 196-residue polypeptide: Protein LSM12 homolog B (196 aa).

The Sm domain maps to alanine 3–isoleucine 70. The AD domain maps to alanine 81–glutamate 175.

The protein belongs to the LSM12 family.

The protein is Protein LSM12 homolog B (lsm12b) of Danio rerio (Zebrafish).